Consider the following 206-residue polypeptide: Probable N-acetyltransferase 14 (206 aa).

The N-acetyltransferase domain occupies 55–206 (LRFVLASFAL…TLVREFSKEL (152 aa)). A helical membrane pass occupies residues 57–77 (FVLASFALALLLPVFLAVAAM).

It belongs to the camello family.

Its subcellular location is the membrane. Its function is as follows. Probable acetyltransferase. Functionally, may act as a transcription factor regulating the expression of coproporphyrinogen oxidase by binding to a promoter regulatory element. The protein is Probable N-acetyltransferase 14 of Bos taurus (Bovine).